The following is a 123-amino-acid chain: Large ribosomal subunit protein uL14 (123 aa).

Belongs to the universal ribosomal protein uL14 family. As to quaternary structure, part of the 50S ribosomal subunit. Forms a cluster with proteins L3 and L19. In the 70S ribosome, L14 and L19 interact and together make contacts with the 16S rRNA in bridges B5 and B8.

Its function is as follows. Binds to 23S rRNA. Forms part of two intersubunit bridges in the 70S ribosome. This is Large ribosomal subunit protein uL14 from Photobacterium profundum (strain SS9).